A 376-amino-acid chain; its full sequence is Lipoyl synthase 1, mitochondrial (376 aa).

The [4Fe-4S] cluster site is built by cysteine 109, cysteine 114, cysteine 120, cysteine 140, cysteine 144, cysteine 147, and serine 356. The Radical SAM core domain maps to 125 to 345 (ETGTATATIM…QTLGMEMGFR (221 aa)).

The protein belongs to the radical SAM superfamily. Lipoyl synthase family. Requires [4Fe-4S] cluster as cofactor.

Its subcellular location is the mitochondrion. It carries out the reaction [[Fe-S] cluster scaffold protein carrying a second [4Fe-4S](2+) cluster] + N(6)-octanoyl-L-lysyl-[protein] + 2 oxidized [2Fe-2S]-[ferredoxin] + 2 S-adenosyl-L-methionine + 4 H(+) = [[Fe-S] cluster scaffold protein] + N(6)-[(R)-dihydrolipoyl]-L-lysyl-[protein] + 4 Fe(3+) + 2 hydrogen sulfide + 2 5'-deoxyadenosine + 2 L-methionine + 2 reduced [2Fe-2S]-[ferredoxin]. It participates in protein modification; protein lipoylation via endogenous pathway; protein N(6)-(lipoyl)lysine from octanoyl-[acyl-carrier-protein]: step 2/2. Its function is as follows. Catalyzes the radical-mediated insertion of two sulfur atoms into the C-6 and C-8 positions of the octanoyl moiety bound to the lipoyl domains of lipoate-dependent enzymes, thereby converting the octanoylated domains into lipoylated derivatives. The chain is Lipoyl synthase 1, mitochondrial from Pisum sativum (Garden pea).